The primary structure comprises 372 residues: N-methyl-L-tryptophan oxidase (372 aa).

Residue 4 to 34 (DLIIIGSGSVGAAAGYYATRAGLNVLMTDAH) participates in FAD binding. Cys-308 carries the post-translational modification S-8alpha-FAD cysteine.

Belongs to the MSOX/MTOX family. MTOX subfamily. As to quaternary structure, monomer. FAD is required as a cofactor.

The enzyme catalyses N(alpha)-methyl-L-tryptophan + O2 + H2O = L-tryptophan + formaldehyde + H2O2. Functionally, catalyzes the oxidative demethylation of N-methyl-L-tryptophan. The protein is N-methyl-L-tryptophan oxidase of Escherichia coli O9:H4 (strain HS).